A 228-amino-acid chain; its full sequence is L-ribulose-5-phosphate 4-epimerase UlaF (228 aa).

Residues 26 to 27 (GN), 43 to 44 (SG), and 72 to 73 (SS) contribute to the substrate site. Residues aspartate 74, histidine 93, and histidine 95 each contribute to the Zn(2+) site. Aspartate 118 serves as the catalytic Proton donor/acceptor. Histidine 167 provides a ligand contact to Zn(2+). The active-site Proton donor/acceptor is tyrosine 225.

Belongs to the aldolase class II family. AraD/FucA subfamily. Requires Zn(2+) as cofactor.

The enzyme catalyses L-ribulose 5-phosphate = D-xylulose 5-phosphate. It functions in the pathway cofactor degradation; L-ascorbate degradation; D-xylulose 5-phosphate from L-ascorbate: step 4/4. Functionally, catalyzes the isomerization of L-ribulose 5-phosphate to D-xylulose 5-phosphate. Is involved in the anaerobic L-ascorbate utilization. The protein is L-ribulose-5-phosphate 4-epimerase UlaF of Salmonella paratyphi A (strain ATCC 9150 / SARB42).